The primary structure comprises 289 residues: Probable endonuclease 4 (289 aa).

Zn(2+) is bound by residues H74, H115, E150, D184, H187, H218, D231, H233, and E263.

This sequence belongs to the AP endonuclease 2 family. Zn(2+) serves as cofactor.

The enzyme catalyses Endonucleolytic cleavage to 5'-phosphooligonucleotide end-products.. Its function is as follows. Endonuclease IV plays a role in DNA repair. It cleaves phosphodiester bonds at apurinic or apyrimidinic (AP) sites, generating a 3'-hydroxyl group and a 5'-terminal sugar phosphate. The polypeptide is Probable endonuclease 4 (Mycoplasma mycoides subsp. mycoides SC (strain CCUG 32753 / NCTC 10114 / PG1)).